The sequence spans 485 residues: ATP synthase subunit beta (485 aa).

The span at 1 to 11 (MPATETADKNT) shows a compositional bias: basic and acidic residues. The segment at 1–20 (MPATETADKNTKSANSDTSG) is disordered. Position 170-177 (170-177 (GGAGVGKT)) interacts with ATP.

This sequence belongs to the ATPase alpha/beta chains family. As to quaternary structure, F-type ATPases have 2 components, CF(1) - the catalytic core - and CF(0) - the membrane proton channel. CF(1) has five subunits: alpha(3), beta(3), gamma(1), delta(1), epsilon(1). CF(0) has three main subunits: a(1), b(2) and c(9-12). The alpha and beta chains form an alternating ring which encloses part of the gamma chain. CF(1) is attached to CF(0) by a central stalk formed by the gamma and epsilon chains, while a peripheral stalk is formed by the delta and b chains.

It is found in the cell membrane. The catalysed reaction is ATP + H2O + 4 H(+)(in) = ADP + phosphate + 5 H(+)(out). In terms of biological role, produces ATP from ADP in the presence of a proton gradient across the membrane. The catalytic sites are hosted primarily by the beta subunits. This Mycobacterium avium (strain 104) protein is ATP synthase subunit beta.